The chain runs to 598 residues: Jacalin-related lectin 17 (598 aa).

The interval 1–23 (MAQRLEAEGNKNFKGKSKWDDGS) is disordered. 4 consecutive Jacalin-type lectin domains span residues 2–148 (AQRL…YVTW), 151–293 (PTKL…YFTT), 295–445 (PFTK…HFCP), and 452–595 (GEKV…HVLP).

Belongs to the jacalin lectin family.

This chain is Jacalin-related lectin 17 (JAL17), found in Arabidopsis thaliana (Mouse-ear cress).